The following is a 508-amino-acid chain: uncharacterized protein (508 aa).

The protein localises to the virion. This is an uncharacterized protein from Acanthamoeba polyphaga mimivirus (APMV).